The following is a 514-amino-acid chain: ATP synthase subunit alpha (514 aa).

G170–T177 is a binding site for ATP.

Belongs to the ATPase alpha/beta chains family. As to quaternary structure, F-type ATPases have 2 components, CF(1) - the catalytic core - and CF(0) - the membrane proton channel. CF(1) has five subunits: alpha(3), beta(3), gamma(1), delta(1), epsilon(1). CF(0) has three main subunits: a(1), b(2) and c(9-12). The alpha and beta chains form an alternating ring which encloses part of the gamma chain. CF(1) is attached to CF(0) by a central stalk formed by the gamma and epsilon chains, while a peripheral stalk is formed by the delta and b chains.

Its subcellular location is the cell inner membrane. It catalyses the reaction ATP + H2O + 4 H(+)(in) = ADP + phosphate + 5 H(+)(out). Its function is as follows. Produces ATP from ADP in the presence of a proton gradient across the membrane. The alpha chain is a regulatory subunit. This is ATP synthase subunit alpha from Ectopseudomonas mendocina (strain ymp) (Pseudomonas mendocina).